A 782-amino-acid polypeptide reads, in one-letter code: Fibrinogen alpha chain (782 aa).

The N-terminal stretch at 1–19 (MLSLRVACLILSLASTVWT) is a signal peptide. Residues 68-547 (GCRMKGLIDE…KRGRARTMRD (480 aa)) adopt a coiled-coil conformation. The span at 264–283 (RPGKDGASRGDLPGDSRGDS) shows a compositional bias: basic and acidic residues. A disordered region spans residues 264–374 (RPGKDGASRG…PATRKEYHTG (111 aa)). Residue serine 279 is modified to Phosphoserine. Positions 311 to 323 (SGSGSDGNWGSGT) are enriched in gly residues. Composition is skewed to low complexity over residues 324-344 (TGSD…SGSG) and 354-364 (GEFSEFGGSSS). Serine 326 bears the Phosphoserine mark. Cysteines 404 and 434 form a disulfide. Position 470 is a phosphoserine (serine 470). Position 499 is a 4-hydroxyproline; by P4HA1 (proline 499). The segment covering 522–536 (DEAASEAHQEGDTRT) has biased composition (basic and acidic residues). The disordered stretch occupies residues 522-542 (DEAASEAHQEGDTRTTKRGRA). Position 526 is a phosphoserine (serine 526). In terms of domain architecture, Fibrinogen C-terminal spans 539–780 (RGRARTMRDC…AVRMKIRPLV (242 aa)). A glycan (N-linked (GlcNAc...) asparagine) is linked at asparagine 602. The Ca(2+) site is built by aspartate 707, aspartate 709, tryptophan 711, and glutamate 713. The cysteines at positions 715 and 728 are disulfide-linked.

In terms of assembly, heterohexamer; disulfide linked. Contains 2 sets of 3 non-identical chains (alpha, beta and gamma). The 2 heterotrimers are in head to head conformation with the N-termini in a small central domain. In terms of processing, conversion of fibrinogen to fibrin is triggered by thrombin, which cleaves fibrinopeptides A and B from alpha and beta chains, and thus exposes the N-terminal polymerization sites responsible for the formation of the soft clot. The soft clot is converted into the hard clot by factor XIIIA which catalyzes the epsilon-(gamma-glutamyl)lysine cross-linking between gamma chains (stronger) and between alpha chains (weaker) of different monomers. Post-translationally, forms F13A-mediated cross-links between a glutamine and the epsilon-amino group of a lysine residue, forming fibronectin-fibrinogen heteropolymers. Phosphorylated by FAM20C in the extracellular medium.

The protein localises to the secreted. Functionally, cleaved by the protease thrombin to yield monomers which, together with fibrinogen beta (FGB) and fibrinogen gamma (FGG), polymerize to form an insoluble fibrin matrix. Fibrin has a major function in hemostasis as one of the primary components of blood clots. In addition, functions during the early stages of wound repair to stabilize the lesion and guide cell migration during re-epithelialization. Was originally thought to be essential for platelet aggregation, based on in vitro studies using anticoagulated blood. However, subsequent studies have shown that it is not absolutely required for thrombus formation in vivo. Enhances expression of SELP in activated platelets via an ITGB3-dependent pathway. Maternal fibrinogen is essential for successful pregnancy. Fibrin deposition is also associated with infection, where it protects against IFNG-mediated hemorrhage. May also facilitate the immune response via both innate and T-cell mediated pathways. The protein is Fibrinogen alpha chain (Fga) of Rattus norvegicus (Rat).